The primary structure comprises 369 residues: Anhydro-N-acetylmuramic acid kinase (369 aa).

12–19 (GTSMDGVD) lines the ATP pocket.

This sequence belongs to the anhydro-N-acetylmuramic acid kinase family.

The catalysed reaction is 1,6-anhydro-N-acetyl-beta-muramate + ATP + H2O = N-acetyl-D-muramate 6-phosphate + ADP + H(+). The protein operates within amino-sugar metabolism; 1,6-anhydro-N-acetylmuramate degradation. It participates in cell wall biogenesis; peptidoglycan recycling. In terms of biological role, catalyzes the specific phosphorylation of 1,6-anhydro-N-acetylmuramic acid (anhMurNAc) with the simultaneous cleavage of the 1,6-anhydro ring, generating MurNAc-6-P. Is required for the utilization of anhMurNAc either imported from the medium or derived from its own cell wall murein, and thus plays a role in cell wall recycling. The chain is Anhydro-N-acetylmuramic acid kinase from Shewanella baltica (strain OS155 / ATCC BAA-1091).